The following is a 94-amino-acid chain: MSRTVFCRKYQSDMEGLPRPPFPGPKGQDIFDHVSQQAWKEWLHEQTMLINEKHLNVMDPEAKRFLDEQRDRFLNNENYEKAEGYVPPAHDANK.

The protein belongs to the Fe(2+)-trafficking protein family.

Functionally, could be a mediator in iron transactions between iron acquisition and iron-requiring processes, such as synthesis and/or repair of Fe-S clusters in biosynthetic enzymes. The protein is Probable Fe(2+)-trafficking protein of Alcanivorax borkumensis (strain ATCC 700651 / DSM 11573 / NCIMB 13689 / SK2).